The sequence spans 403 residues: Na(+)-translocating NADH-quinone reductase subunit B (403 aa).

9 helical membrane-spanning segments follow: residues 56-76, 121-141, 164-184, 225-245, 260-280, 287-307, 312-332, 348-368, and 371-391; these read MMII…YNVG, AYFL…EVLF, LPPS…VVLG, GFAG…NILG, GSMG…LLLT, IVAG…AIGS, MFAM…GMIF, WLFG…NPAF, and GMML…HFVV. The residue at position 230 (Thr230) is an FMN phosphoryl threonine.

Belongs to the NqrB/RnfD family. Composed of six subunits; NqrA, NqrB, NqrC, NqrD, NqrE and NqrF. Requires FMN as cofactor.

Its subcellular location is the cell inner membrane. It catalyses the reaction a ubiquinone + n Na(+)(in) + NADH + H(+) = a ubiquinol + n Na(+)(out) + NAD(+). Its function is as follows. NQR complex catalyzes the reduction of ubiquinone-1 to ubiquinol by two successive reactions, coupled with the transport of Na(+) ions from the cytoplasm to the periplasm. NqrA to NqrE are probably involved in the second step, the conversion of ubisemiquinone to ubiquinol. This is Na(+)-translocating NADH-quinone reductase subunit B from Pseudomonas paraeruginosa (strain DSM 24068 / PA7) (Pseudomonas aeruginosa (strain PA7)).